The following is a 354-amino-acid chain: 3-dehydroquinate synthase (354 aa).

NAD(+) contacts are provided by residues 66-71 (DGERYK), 100-104 (GVVGD), 124-125 (TT), Lys-137, and Lys-146. Residues Glu-179, His-242, and His-259 each coordinate Zn(2+).

This sequence belongs to the sugar phosphate cyclases superfamily. Dehydroquinate synthase family. Requires Co(2+) as cofactor. Zn(2+) serves as cofactor. NAD(+) is required as a cofactor.

It is found in the cytoplasm. It catalyses the reaction 7-phospho-2-dehydro-3-deoxy-D-arabino-heptonate = 3-dehydroquinate + phosphate. It functions in the pathway metabolic intermediate biosynthesis; chorismate biosynthesis; chorismate from D-erythrose 4-phosphate and phosphoenolpyruvate: step 2/7. Its function is as follows. Catalyzes the conversion of 3-deoxy-D-arabino-heptulosonate 7-phosphate (DAHP) to dehydroquinate (DHQ). The sequence is that of 3-dehydroquinate synthase from Halorhodospira halophila (strain DSM 244 / SL1) (Ectothiorhodospira halophila (strain DSM 244 / SL1)).